Here is a 555-residue protein sequence, read N- to C-terminus: MSLNTDDSGRIRTRQRAKRACETCKLRKRKCDGHEPCTYCLRYEYQCTFKPHPRRKPAASKSSARPSEEEDSPKFLDRVDANQEHMEANSGTAFPHLLGMRLNPQGAPKVYGFSWNLGPRDEPLEPFTNLTDLISREEMEDLASHYLKKIHPVYAVLDPDTLRQKIVARWHDPATAASYDPILCSVAALGSLYSGHQEHPKEGALVQSAKEMLETTRISKTTLLHHATAWILRTIYLRSTNCPHASWMASCSTMHIIEAIGAHQDPELVSLVYSDTADVSVNDESQRRLFWVATVLNSWISYEYGRSRVILRGVSCKPPLPRTGDFTTDLISMYQISERLDPDQNNKLSDLEDALSRVERLTLSHDALILSQSNLALTIYRRLRVASSNISNDILTRIIRLGNDGLEAAVRLAEDRSPWWHVANIPFQFLCILLAIDTRESLSYVGPALRSFRAITRHYSTPTLHTALETIESLVRLSQNKKERDLTLLRDSMQQEDPGLTEQGSTTSQAFNDASWLGATGDLTLPDNFDWDWNVFLDTQVPFFDEGEAGGQRYR.

The segment at residues 21-47 (CETCKLRKRKCDGHEPCTYCLRYEYQC) is a DNA-binding region (zn(2)-C6 fungal-type). A disordered region spans residues 51–73 (PHPRRKPAASKSSARPSEEEDSP).

It is found in the nucleus. Its function is as follows. Transcription factor that regulates the gene cluster that mediates the biosynthesis of 5-hydroxy-2-hydroxymethyl-1,4-pyrone, also know as kojic acid, a by-product in the fermentation process of malting rice that acts as a chelation agent. Mediates the expression of kojA and kojT via binding of an 11-nucleotide palindromic sequence, 5'-CGRCTWAGYCG-3' (R=A/G, W=A/T, Y=C/T) within the target gene promoters. The polypeptide is Transcription factor kojR (Aspergillus flavus (strain ATCC 200026 / FGSC A1120 / IAM 13836 / NRRL 3357 / JCM 12722 / SRRC 167)).